The chain runs to 858 residues: Polyhomeotic-like protein 2 (858 aa).

Disordered stretches follow at residues 1–76, 230–307, 337–388, 407–444, 473–493, and 529–561; these read MENE…QYLQ, QQTP…MEGR, PQPS…VALQ, LQCPTANLHKPGGSQQCHPPTPDTGPQNGHPEGVPHTP, KEVAPGEKSVPETRSGPSPHQ, and TDLSSPGMTSGNGNSASSIAGTAPQNGENKPPQ. 2 stretches are compositionally biased toward low complexity: residues 10-34 and 230-241; these read TSSSACATSSTSGASSSSGCNNSSS and QQTPAAAASGPT. The segment at 33–53 is interaction with BMI1; it reads SSGGSGRPTGPQISVYSGIPD. Positions 265–274 are enriched in polar residues; the sequence is PAQSRNTAQA. The span at 337–358 shows a compositional bias: low complexity; the sequence is PQPSSKHLQPQFVIQQQPQPQQ. The span at 379-388 shows a compositional bias: polar residues; it reads ASVSPSVALQ. The segment covering 473–483 has biased composition (basic and acidic residues); that stretch reads KEVAPGEKSVP. Positions 537 to 551 are enriched in low complexity; that stretch reads TSGNGNSASSIAGTA. An HD1 motif is present at residues 558–587; sequence KPPQAIVKPQILTHVIEGFVIQEGAEPFPV. Residues Lys598 and Lys600 each participate in a glycyl lysine isopeptide (Lys-Gly) (interchain with G-Cter in SUMO2) cross-link. Thr619 carries the phosphothreonine modification. The residue at position 621 (Ser621) is a Phosphoserine. Residue Lys632 forms a Glycyl lysine isopeptide (Lys-Gly) (interchain with G-Cter in SUMO2) linkage. The segment at 633–667 adopts an FCS-type zinc-finger fold; sequence EEGAPLKLKCELCGRVDFAYKFKRSKRFCSMACAK. 4 residues coordinate Zn(2+): Cys642, Cys645, Cys661, and Cys665. Disordered regions lie at residues 688–720 and 732–768; these read QKAGAATHNRRRASKASLPPLTKDTKKQPTGTV and HSQEDSSRCSDNSSYEEPLSPISASSSTSRRRQGQRD. Lys702 participates in a covalent cross-link: Glycyl lysine isopeptide (Lys-Gly) (interchain with G-Cter in SUMO2). At Ser751 the chain carries Phosphoserine. The region spanning 794 to 858 is the SAM domain; sequence WNVEDVYEFI…YARISMLKDS (65 aa). Residue Lys847 forms a Glycyl lysine isopeptide (Lys-Gly) (interchain with G-Cter in SUMO2) linkage.

In terms of assembly, component of a PRC1-like complex. Interacts with CBX4. Interacts with BMI1, PCGF2, PHC1 and RNF2. Interacts with CHTOP. Interacts with the N-terminal region of the SP1 transcription factor and with MAPKAPK2. Interacts with SAMD7 and SAMD11.

The protein resides in the nucleus. Its function is as follows. Component of a Polycomb group (PcG) multiprotein PRC1-like complex, a complex class required to maintain the transcriptionally repressive state of many genes, including Hox genes, throughout development. PcG PRC1 complex acts via chromatin remodeling and modification of histones; it mediates monoubiquitination of histone H2A 'Lys-119', rendering chromatin heritably changed in its expressibility. This chain is Polyhomeotic-like protein 2 (PHC2), found in Homo sapiens (Human).